Reading from the N-terminus, the 407-residue chain is 12S rRNA N(4)-cytidine methyltransferase METTL15 (407 aa).

Residues 100–102 (GGH), D119, F146, D169, and Q176 contribute to the S-adenosyl-L-methionine site. S358 bears the Phosphoserine mark.

The protein belongs to the methyltransferase superfamily. RsmH family.

It localises to the mitochondrion matrix. The enzyme catalyses cytidine(839) in 12S rRNA + S-adenosyl-L-methionine = N(4)-methylcytidine(839) in 12S rRNA + S-adenosyl-L-homocysteine + H(+). Its function is as follows. N4-methylcytidine (m4C) methyltransferase responsible for the methylation of position C839 in mitochondrial 12S rRNA. Involved in the stabilization of 12S rRNA folding, therefore facilitating the assembly of the mitochondrial small ribosomal subunits. The sequence is that of 12S rRNA N(4)-cytidine methyltransferase METTL15 (METTL15) from Pongo abelii (Sumatran orangutan).